We begin with the raw amino-acid sequence, 426 residues long: 3-phosphoshikimate 1-carboxyvinyltransferase (426 aa).

3-phosphoshikimate contacts are provided by Lys22, Ser23, and Arg27. Position 22 (Lys22) interacts with phosphoenolpyruvate. The phosphoenolpyruvate site is built by Gly96 and Arg124. 3-phosphoshikimate is bound by residues Ser170, Ser171, Gln172, Ser198, Asp314, Asn337, and Lys341. Gln172 serves as a coordination point for phosphoenolpyruvate. Asp314 functions as the Proton acceptor in the catalytic mechanism. The phosphoenolpyruvate site is built by Arg345, Arg387, and Lys412.

The protein belongs to the EPSP synthase family. As to quaternary structure, monomer.

The protein localises to the cytoplasm. It catalyses the reaction 3-phosphoshikimate + phosphoenolpyruvate = 5-O-(1-carboxyvinyl)-3-phosphoshikimate + phosphate. It functions in the pathway metabolic intermediate biosynthesis; chorismate biosynthesis; chorismate from D-erythrose 4-phosphate and phosphoenolpyruvate: step 6/7. Functionally, catalyzes the transfer of the enolpyruvyl moiety of phosphoenolpyruvate (PEP) to the 5-hydroxyl of shikimate-3-phosphate (S3P) to produce enolpyruvyl shikimate-3-phosphate and inorganic phosphate. In Shewanella piezotolerans (strain WP3 / JCM 13877), this protein is 3-phosphoshikimate 1-carboxyvinyltransferase.